We begin with the raw amino-acid sequence, 476 residues long: MKTKITLSGFAGTGKSTVGKRIQEQLNFEFVSVGNYSRQYAMEKYGLTINEFQEQCKAQPELDNEIDEKFRLECNSKENLVIDYRLGFHFIKNAFHVLLKVSDESASKRIRLANRSDEVTSTKAIQQRNQKMRDRFQDNYGVDFTNDKNYDLVIDTDDLTANEVADLIIEHYQKSNAVSKIPSVNFHLWQPCNMRCKFCFATFLDVKQEYVPKGHLPEDEALEVVRKIAAAGFEKITFAGGEPLLCKWLPKLIKTAKQLGMTTMIVTNGSKLTDSFLKENKAYLDWIAVSIDSLDEENNIKIGRAITGKKPLSKAFYYDLIDKIHQYGYGLKINTVVNKVNYKDNLASFIAKAKPKRWKVLQVLPIKGQNDNKIDAFKITDEEYANFLDTHKDVETIVPESNDEIKGSYVMVDPAGRFFDNAAGTHNYSKPILEVGIQEALKTMNYDLDKFLNRGGVYNWNTNKNQDLRKEEVSYE.

The interval 1–168 (MKTKITLSGF…LTANEVADLI (168 aa)) is cytidylate kinase-like domain. Residue 9–17 (GFAGTGKST) participates in ATP binding. Residues 176 to 400 (NAVSKIPSVN…HKDVETIVPE (225 aa)) form the Radical SAM core domain. Positions 183-476 (SVNFHLWQPC…DLRKEEVSYE (294 aa)) are prokaryotic viperin domain. [4Fe-4S] cluster-binding residues include Cys192, Cys196, and Cys199.

In the N-terminal section; belongs to the cytidylate kinase-like family. This sequence in the C-terminal section; belongs to the radical SAM superfamily. Viperin family. Requires [4Fe-4S] cluster as cofactor.

The catalysed reaction is GTP + AH2 + S-adenosyl-L-methionine = 3'-deoxy-3',4'-didehydro-GTP + 5'-deoxyadenosine + L-methionine + A + H2O + H(+). Its function is as follows. Expression of pVip60 in E.coli (strain MG1655) confers resistance to phage T7; prevents culture collapse upon infection. Catalyzes the conversion of guanosine triphosphate (GTP) to 3'-deoxy-3',4'-didehydro-GTP (ddhGTP), probably via a SAM-dependent radical mechanism. The modified nucleotide represses transcription from T7 RNA polymerase-directed genes (possibly by acting as chain terminators), strongly suggesting these nucleotides block viral polymerase transcription. Functionally, the N-terminus of the protein may generate NTP for use by the viperin domain. The protein is S-adenosylmethionine-dependent nucleotide dehydratase of Lacinutrix mariniflava (strain JCM 13824 / KCCM 42306 / AKS432).